A 199-amino-acid polypeptide reads, in one-letter code: Holliday junction branch migration complex subunit RuvA (199 aa).

Residues 1-64 (MIGRLRGILL…DDAHLLYAFA (64 aa)) form a domain I region. A domain II region spans residues 65 to 143 (SEKERGLFRS…DMPESGVAGM (79 aa)). The interval 144-150 (RPDRVDG) is flexible linker. A domain III region spans residues 151–199 (SAPGTVAEAVSALVALGYKPNEASRAVRRLDTEALTTEEIIRQALQRML).

It belongs to the RuvA family. Homotetramer. Forms an RuvA(8)-RuvB(12)-Holliday junction (HJ) complex. HJ DNA is sandwiched between 2 RuvA tetramers; dsDNA enters through RuvA and exits via RuvB. An RuvB hexamer assembles on each DNA strand where it exits the tetramer. Each RuvB hexamer is contacted by two RuvA subunits (via domain III) on 2 adjacent RuvB subunits; this complex drives branch migration. In the full resolvosome a probable DNA-RuvA(4)-RuvB(12)-RuvC(2) complex forms which resolves the HJ.

The protein localises to the cytoplasm. Its function is as follows. The RuvA-RuvB-RuvC complex processes Holliday junction (HJ) DNA during genetic recombination and DNA repair, while the RuvA-RuvB complex plays an important role in the rescue of blocked DNA replication forks via replication fork reversal (RFR). RuvA specifically binds to HJ cruciform DNA, conferring on it an open structure. The RuvB hexamer acts as an ATP-dependent pump, pulling dsDNA into and through the RuvAB complex. HJ branch migration allows RuvC to scan DNA until it finds its consensus sequence, where it cleaves and resolves the cruciform DNA. The polypeptide is Holliday junction branch migration complex subunit RuvA (Nitrosococcus oceani (strain ATCC 19707 / BCRC 17464 / JCM 30415 / NCIMB 11848 / C-107)).